The chain runs to 1696 residues: E3 ubiquitin-protein ligase listerin (1696 aa).

HEAT repeat units follow at residues 17 to 55 (RGVL…KVKK), 102 to 140 (FCKE…KYFR), 144 to 181 (CSLL…WKYS), 209 to 250 (AEAS…CWEH), 252 to 289 (NAQK…RVPT), 354 to 394 (LISD…KAES), 431 to 468 (EKNL…GEGD), 542 to 580 (FPSI…PAVQ), 596 to 634 (EESD…KWSV), 921 to 958 (LCTA…AEML), 992 to 1029 (MDLS…KRGA), 1108 to 1148 (DLCQ…LIGL), 1150 to 1188 (VEMI…WLES), 1245 to 1282 (GIYS…TLGY), 1307 to 1344 (DSLQ…DLPG), 1371 to 1405 (VLAI…CFVL), and 1406 to 1442 (GYLL…LNKL). The segment at 1645-1692 (CMICFSVIHGSNYSLPKKACRTCKKKFHSECLYKWFTSSNKSTCPLCR) adopts an RING-type zinc-finger fold.

This sequence belongs to the LTN1 family. Component of the ribosome quality control complex (RQC), composed of at least the E3 ubiquitin ligase LTN1 and NEMF associated with the 60S ribosomal subunit. The complex probably also contains TCF25 as well as VCP/p97 and its ubiquitin-binding cofactors.

Its subcellular location is the cytoplasm. The protein localises to the cytosol. The catalysed reaction is S-ubiquitinyl-[E2 ubiquitin-conjugating enzyme]-L-cysteine + [acceptor protein]-L-lysine = [E2 ubiquitin-conjugating enzyme]-L-cysteine + N(6)-ubiquitinyl-[acceptor protein]-L-lysine.. It functions in the pathway protein modification; protein ubiquitination. Its function is as follows. E3 ubiquitin-protein ligase component of the ribosome quality control complex (RQC), a ribosome-associated complex that mediates ubiquitination and extraction of incompletely synthesized nascent chains for proteasomal degradation. Within the RQC complex, LTN1 is recruited to stalled 60S ribosomal subunits by NEMF and mediates ubiquitination of stalled nascent chains. Ubiquitination leads to VCP/p97 recruitment for extraction and degradation of the incomplete translation product. The polypeptide is E3 ubiquitin-protein ligase listerin (ltn1) (Xenopus tropicalis (Western clawed frog)).